A 267-amino-acid chain; its full sequence is Interleukin-1 beta (267 aa).

The propeptide occupies 1–115 (MAPVPELTSE…DTWDDGFVCD (115 aa)).

Belongs to the IL-1 family. As to quaternary structure, monomer. In its precursor form, weakly interacts with full-length MEFV; the mature cytokine does not interact at all. Interacts with integrins ITGAV:ITGBV and ITGA5:ITGB1; integrin-binding is required for IL1B signaling. Interacts with cargo receptor TMED10; the interaction is direct and is required for the secretion of IL1B mature form. Interacts with HSP90AB1; the interaction facilitates cargo translocation into the ERGIC. Interacts with HSP90B1; the interaction facilitates cargo translocation into the ERGIC.

The protein resides in the cytoplasm. The protein localises to the cytosol. It is found in the secreted. Its subcellular location is the lysosome. It localises to the extracellular exosome. Functionally, potent pro-inflammatory cytokine. Initially discovered as the major endogenous pyrogen, induces prostaglandin synthesis, neutrophil influx and activation, T-cell activation and cytokine production, B-cell activation and antibody production, and fibroblast proliferation and collagen production. Promotes Th17 differentiation of T-cells. Synergizes with IL12/interleukin-12 to induce IFNG synthesis from T-helper 1 (Th1) cells. Plays a role in angiogenesis by inducing VEGF production synergistically with TNF and IL6. Involved in transduction of inflammation downstream of pyroptosis: its mature form is specifically released in the extracellular milieu by passing through the gasdermin-D (GSDMD) pore. The chain is Interleukin-1 beta (IL1B) from Felis catus (Cat).